Here is a 611-residue protein sequence, read N- to C-terminus: Immunoglobulin superfamily member 8 (611 aa).

Positions 1-25 are cleaved as a signal peptide; that stretch reads MGVPSPTPLSSLLLLLLILGTRCYA. Ig-like C2-type domains are found at residues 26–143, 160–284, 301–422, and 429–554; these read RQVH…AKVE, PRGR…WVQV, SQLA…EAAS, and PVHV…ADYS. The Extracellular segment spans residues 26 to 577; that stretch reads RQVHVPRGPL…VYPYTHAVDT (552 aa). A disulfide bridge links cysteine 47 with cysteine 125. 2 N-linked (GlcNAc...) asparagine glycosylation sites follow: asparagine 48 and asparagine 137. Residues cysteine 184 and cysteine 268 are joined by a disulfide bond. The short motif at 272–274 is the EWI motif element; that stretch reads EWI. 2 disulfide bridges follow: cysteine 324–cysteine 404 and cysteine 460–cysteine 542. N-linked (GlcNAc...) asparagine glycosylation is present at asparagine 325. The residue at position 516 (serine 516) is a Phosphoserine. A helical membrane pass occupies residues 578-598; it reads LFVPLLVGTGVALVTGASVLA. Topologically, residues 599-611 are cytoplasmic; sequence TITCCFMKRMRKR. Residues cysteine 602 and cysteine 603 are each lipidated (S-palmitoyl cysteine).

In terms of assembly, interacts directly with CD82 and CD9/tetraspanin-29. Also interacts with integrin alpha-3/beta-1 and integrin alpha-4/beta-1. Part of a complex composed of CD9, PTGFRN and CD81. Interacts with CD81/tetraspanin-28. As to expression, expressed in lymphocytes as well as in many tissues with higher expression in brain. Detected in all regions of the brain with weak expression in the pituitary. Expressed selectively by neurons but not by glial cells. Expressed in myoblasts (at protein level).

Its subcellular location is the cell membrane. In terms of biological role, member of the immunoglobulin superfamily (IgSF) that links tetraspanin-enriched microdomains to the actin cytoskeleton and plays several important roles in innate and adaptive immunity. Acts as an inducible receptor of HSPA8 on dendritic cells to enhance the CCL21/SLC-dependent migration of activated mature dendritic cells while attenuating their antigen-specific stimulatory capacities. In complex with alpha-actinins ACTN1 and ACTN4, regulates actin dynamics in the immune synapse and subsequent T-cell activation. Inhibits the entry of several viruses such as hepatitis C Virus (HCV) or HIV-1. Mechanistically, promotes a change in CD81 organization at the plasma membrane by significantly restricting its diffusion which in turn influences CD81 interaction with Claudin-1/CLDN1, preventing CLDN1 from acting as a co-receptor required for HCV entry. Accumulates at the presynaptic terminal, the producer cell side of the virological synapse, to prevent HIV-1 Env-mediated cell-cell fusion. Highly expressed on malignant cells with antigen presentation defects, interacts with NK receptor KLRA9 to suppress NK-cell cytotoxicity. May participate in the regulation of neurite outgrowth and maintenance of the neural network in the adult brain. This chain is Immunoglobulin superfamily member 8 (Igsf8), found in Mus musculus (Mouse).